The following is a 355-amino-acid chain: Heterogeneous nuclear ribonucleoprotein D0 (355 aa).

Positions 1-92 (MSEEQFGGDG…SPRHSEAATA (92 aa)) are disordered. An N-acetylserine modification is found at Ser2. Low complexity-rich tracts occupy residues 11–20 (AAAAATAAVG) and 27–42 (EGAM…AAAG). The span at 43 to 58 (SGAGTGGGTASGGTEG) shows a compositional bias: gly residues. Over residues 64–73 (EGAKIDASKN) the composition is skewed to basic and acidic residues. A Phosphoserine modification is found at Ser71. Lys72 participates in a covalent cross-link: Glycyl lysine isopeptide (Lys-Gly) (interchain with G-Cter in SUMO2). Ser80, Ser82, and Ser83 each carry phosphoserine. Thr91 carries the post-translational modification Phosphothreonine. 2 RRM domains span residues 97–179 (WKMF…KTKE) and 182–261 (KKIF…MSKE). Position 119 is an N6-methyllysine (Lys119). Thr127 is modified (phosphothreonine). Residue Lys129 forms a Glycyl lysine isopeptide (Lys-Gly) (interchain with G-Cter in SUMO2) linkage. Lys165 carries the N6-acetyllysine modification. Ser190 bears the Phosphoserine mark. Residue Thr193 is modified to Phosphothreonine. Lys197 is covalently cross-linked (Glycyl lysine isopeptide (Lys-Gly) (interchain with G-Cter in SUMO2)). N6-acetyllysine is present on residues Lys243 and Lys251. Position 263 is an omega-N-methylarginine (Tyr263). The residue at position 271 (Ser271) is a Phosphoserine. Arg272 carries the omega-N-methylarginine modification. The residue at position 273 (Gly273) is an N6-acetyllysine. Residues Arg278, Arg280, and Arg282 each carry the omega-N-methylarginine modification. Gln292 carries the N6-acetyllysine modification. Position 345 is an asymmetric dimethylarginine; alternate (Arg345). Position 345 is a dimethylated arginine; alternate (Arg345). Omega-N-methylarginine; alternate is present on Arg345.

Identified in a IGF2BP1-dependent mRNP granule complex containing untranslated mRNAs. Part of a complex associated with the FOS mCRD domain and consisting of PABPC1, PAIP1, CSDE1/UNR and SYNCRIP. Interacts with IGF2BP2. Interacts with GTPBP1. Interacts with EIF4G1; the interaction requires RNA. Interacts with EIF3B and RPS3. Post-translationally, arg-345 is dimethylated, probably to asymmetric dimethylarginine. Methylated by PRMT1, in an insulin-dependent manner. The PRMT1-mediated methylation regulates tyrosine phosphorylation.

It localises to the nucleus. Its subcellular location is the cytoplasm. In terms of biological role, binds with high affinity to RNA molecules that contain AU-rich elements (AREs) found within the 3'-UTR of many proto-oncogenes and cytokine mRNAs. Also binds to double- and single-stranded DNA sequences in a specific manner and functions a transcription factor. Each of the RNA-binding domains specifically can bind solely to a single-stranded non-monotonous 5'-UUAG-3' sequence and also weaker to the single-stranded 5'-TTAGGG-3' telomeric DNA repeat. Binds RNA oligonucleotides with 5'-UUAGGG-3' repeats more tightly than the telomeric single-stranded DNA 5'-TTAGGG-3' repeats. Binding of RRM1 to DNA inhibits the formation of DNA quadruplex structure which may play a role in telomere elongation. May be involved in translationally coupled mRNA turnover. Implicated with other RNA-binding proteins in the cytoplasmic deadenylation/translational and decay interplay of the FOS mRNA mediated by the major coding-region determinant of instability (mCRD) domain. May play a role in the regulation of the rhythmic expression of circadian clock core genes. Directly binds to the 3'UTR of CRY1 mRNA and induces CRY1 rhythmic translation. May also be involved in the regulation of PER2 translation. The sequence is that of Heterogeneous nuclear ribonucleoprotein D0 (HNRNPD) from Homo sapiens (Human).